Consider the following 115-residue polypeptide: Phosphoribosyl-AMP cyclohydrolase (115 aa).

Asp80 provides a ligand contact to Mg(2+). Zn(2+) is bound at residue Cys81. The Mg(2+) site is built by Asp82 and Asp84. Cys97 and Cys104 together coordinate Zn(2+).

The protein belongs to the PRA-CH family. Homodimer. The cofactor is Mg(2+). Zn(2+) serves as cofactor.

It is found in the cytoplasm. It carries out the reaction 1-(5-phospho-beta-D-ribosyl)-5'-AMP + H2O = 1-(5-phospho-beta-D-ribosyl)-5-[(5-phospho-beta-D-ribosylamino)methylideneamino]imidazole-4-carboxamide. The protein operates within amino-acid biosynthesis; L-histidine biosynthesis; L-histidine from 5-phospho-alpha-D-ribose 1-diphosphate: step 3/9. In terms of biological role, catalyzes the hydrolysis of the adenine ring of phosphoribosyl-AMP. This is Phosphoribosyl-AMP cyclohydrolase from Mycolicibacterium gilvum (strain PYR-GCK) (Mycobacterium gilvum (strain PYR-GCK)).